A 315-amino-acid polypeptide reads, in one-letter code: Manganese-dependent 2,3-dihydroxybiphenyl 1,2-dioxygenase (315 aa).

VOC domains lie at 7–121 (KFGH…IYYD) and 150–273 (RIDH…LFSG). The Mn(2+) site is built by histidine 153, histidine 216, and glutamate 269.

This sequence belongs to the extradiol ring-cleavage dioxygenase family. As to quaternary structure, homotetramer. Mn(2+) is required as a cofactor.

It carries out the reaction biphenyl-2,3-diol + O2 = 2-hydroxy-6-oxo-6-phenylhexa-2,4-dienoate + H(+). It functions in the pathway xenobiotic degradation; biphenyl degradation; 2-hydroxy-2,4-pentadienoate and benzoate from biphenyl: step 3/4. Functionally, catalyzes the meta-cleavage of the hydroxylated biphenyl ring. The enzyme can oxidize a wide range of substrates, and the substrate preference order is 2,3-dihydroxybiphenyl &gt; 3-methylcatechol &gt; catechol &gt; 4-methylcatechol &gt; 4-chlorocatechol. The polypeptide is Manganese-dependent 2,3-dihydroxybiphenyl 1,2-dioxygenase (bphC) (Geobacillus genomosp. 3).